We begin with the raw amino-acid sequence, 58 residues long: UPF0337 protein SAV_738 (58 aa).

The interval 1–58 (MAADEKAQANGEQAKGKVKKVVGGAAGNESLKGKGHAEESKGDLRAAKEKAKDAIKRK) is disordered. Over residues 31–58 (LKGKGHAEESKGDLRAAKEKAKDAIKRK) the composition is skewed to basic and acidic residues.

This sequence belongs to the UPF0337 (CsbD) family.

The polypeptide is UPF0337 protein SAV_738 (Streptomyces avermitilis (strain ATCC 31267 / DSM 46492 / JCM 5070 / NBRC 14893 / NCIMB 12804 / NRRL 8165 / MA-4680)).